Reading from the N-terminus, the 395-residue chain is Dihydrolipoyllysine-residue succinyltransferase component of 2-oxoglutarate dehydrogenase complex (395 aa).

Residues 2-77 form the Lipoyl-binding domain; sequence RVKIIVPSLG…AVGEEIGEIN (76 aa). Residue lysine 43 is modified to N6-lipoyllysine. Residues 111 to 148 enclose the Peripheral subunit-binding (PSBD) domain; sequence TLAPSVQKLVTENKLDPNNIKGTGRDGRITKGDVLATI. Active-site residues include histidine 366 and aspartate 370.

This sequence belongs to the 2-oxoacid dehydrogenase family. Forms a 24-polypeptide structural core with octahedral symmetry. Part of the 2-oxoglutarate dehydrogenase (OGDH) complex composed of E1 (2-oxoglutarate dehydrogenase), E2 (dihydrolipoamide succinyltransferase) and E3 (dihydrolipoamide dehydrogenase); the complex contains multiple copies of the three enzymatic components (E1, E2 and E3). (R)-lipoate serves as cofactor.

The catalysed reaction is N(6)-[(R)-dihydrolipoyl]-L-lysyl-[protein] + succinyl-CoA = N(6)-[(R)-S(8)-succinyldihydrolipoyl]-L-lysyl-[protein] + CoA. Its pathway is amino-acid degradation; L-lysine degradation via saccharopine pathway; glutaryl-CoA from L-lysine: step 6/6. Functionally, E2 component of the 2-oxoglutarate dehydrogenase (OGDH) complex which catalyzes the second step in the conversion of 2-oxoglutarate to succinyl-CoA and CO(2). The protein is Dihydrolipoyllysine-residue succinyltransferase component of 2-oxoglutarate dehydrogenase complex (sucB) of Rickettsia conorii (strain ATCC VR-613 / Malish 7).